Reading from the N-terminus, the 439-residue chain is Proline--tRNA ligase (439 aa).

It belongs to the class-II aminoacyl-tRNA synthetase family. ProS type 2 subfamily. Homodimer.

It is found in the cytoplasm. It catalyses the reaction tRNA(Pro) + L-proline + ATP = L-prolyl-tRNA(Pro) + AMP + diphosphate. Catalyzes the attachment of proline to tRNA(Pro) in a two-step reaction: proline is first activated by ATP to form Pro-AMP and then transferred to the acceptor end of tRNA(Pro). The sequence is that of Proline--tRNA ligase from Rhodopseudomonas palustris (strain BisB5).